The primary structure comprises 351 residues: MAEAKTCNMEVSCALPEGSVKPNAEDMTSKDYYFDSYAHFGIHEEMLKDEVRTLTYRNSMFHNRHLFKDKVVLDVGSGTGILCMFAAKAGAKKVIGIECSSISDYAIKIVKANKLDHVVTIIKGKVEEVELPVEKVDIIISEWMGYCLFYESMLNTVIYARDKWLNPDGLIFPDRATLYVTAIEDRQYKDYKIHWWENVYGFDMSCIKDVAIKEPLVDVVDPKQLVSNACLIKEVDIYTVKVDDLTFTSPFCLQVKRNDYIHAMVAYFNIEFTRCHKRTGFSTSPESPYTHWKQTVFYMEDYLTVKTGEEIFGTISMKPNAKNNRDLDFTVDIDFKGQLCELSCSTDYRMR.

Residues 30–331 (KDYYFDSYAH…KNNRDLDFTV (302 aa)) form the SAM-dependent MTase PRMT-type domain. His43, Arg52, Gly76, Glu98, and Glu127 together coordinate S-adenosyl-L-methionine. Catalysis depends on residues Glu142 and Glu151.

The protein belongs to the class I-like SAM-binding methyltransferase superfamily. Protein arginine N-methyltransferase family. In terms of assembly, homodimer. Homooctamer; individual homodimers associates to form a homooctamer and homooligomerization is required for proper localization to the cell membrane. Individual homodimers can associate to form a homohexamer. Component of a complex with lsm14a/rap55a. Interacts with cirbp. In terms of tissue distribution, from the onset of gastrulation, expressed in dorsal mesoderm, and in dorsal and ventral ectoderm. At the neurula and tail bud stages, expression is restricted to the neuroectoderm, with highest expression in the anterior neural plate.

The protein localises to the nucleus. Its subcellular location is the nucleoplasm. The protein resides in the cytoplasm. It is found in the cytosol. The catalysed reaction is L-arginyl-[protein] + 2 S-adenosyl-L-methionine = N(omega),N(omega)-dimethyl-L-arginyl-[protein] + 2 S-adenosyl-L-homocysteine + 2 H(+). The enzyme catalyses L-arginyl-[protein] + S-adenosyl-L-methionine = N(omega)-methyl-L-arginyl-[protein] + S-adenosyl-L-homocysteine + H(+). It catalyses the reaction N(omega)-methyl-L-arginyl-[protein] + S-adenosyl-L-methionine = N(omega),N(omega)-dimethyl-L-arginyl-[protein] + S-adenosyl-L-homocysteine + H(+). In terms of biological role, arginine methyltransferase that methylates (mono and asymmetric dimethylation) the guanidino nitrogens of arginyl residues present in target proteins. Constitutes the main enzyme that mediates monomethylation and asymmetric dimethylation of histone H4 'Arg-4' (H4R3me1 and H4R3me2a, respectively), a specific tag for epigenetic transcriptional activation. Methylates ilf3 to regulate its DNA-binding activity. Required for neural induction, playing a key role in the control of epidermal versus neural cell fate choice. The protein is Protein arginine N-methyltransferase 1-B (prmt1-b) of Xenopus laevis (African clawed frog).